Here is a 237-residue protein sequence, read N- to C-terminus: RING finger protein vilya (237 aa).

An RING-type zinc finger spans residues Cys21–Arg69. The disordered stretch occupies residues Met172 to Leu237. Over residues Arg180–Ser195 the composition is skewed to low complexity. Residues Arg221–Leu237 are compositionally biased toward polar residues.

In terms of assembly, may interact with itself and with narya and nenya through their RING-type zinc fingers. Expressed in nurse cell and pro-oocytes (at protein level).

The protein resides in the chromosome. Functionally, required for the formation of DNA double-strand breaks during meiosis together with narya and nenya. The protein is RING finger protein vilya of Drosophila melanogaster (Fruit fly).